Here is a 582-residue protein sequence, read N- to C-terminus: NAB transcription cofactor mab-10 (582 aa).

The segment covering 1–70 (MSSSSSSSLP…SSSSQRQSTS (70 aa)) has biased composition (low complexity). Disordered stretches follow at residues 1–84 (MSSS…MPTP), 257–287 (SDQQ…PAGI), 333–365 (PPSS…SPFL), and 516–582 (SRKR…LPES). The tract at residues 83–161 (TPTTLSEWQL…EYSQDQTAFN (79 aa)) is NCD1. Composition is skewed to low complexity over residues 257 to 276 (SDQQ…STSS) and 333 to 345 (PPSS…PSTS). The tract at residues 396-519 (LSTAQISRLA…GYNYAKSRKR (124 aa)) is NCD2. Residues 573-582 (EKMKGELPES) are compositionally biased toward basic and acidic residues.

Belongs to the NAB family. As to quaternary structure, interacts with transcription factor lin-29 (via C-terminus).

It localises to the nucleus. In terms of biological role, transcriptional cofactor. Heterochronic protein, involved in timing of a subset of differentiation events during the larval-to-adult transition. Promotes hypodermal terminal differentiation, together with transcription factor lin-29, perhaps as part of a transcriptional complex. Involved in regulating molting by repressing the expression of nuclear hormone receptors nhr-23 and nhr-25 in the adult hypoderm, probably acting in concert with lin-29. This Caenorhabditis elegans protein is NAB transcription cofactor mab-10.